Reading from the N-terminus, the 588-residue chain is Transcription factor 7-like 1 (588 aa).

The span at 1–31 shows a compositional bias: gly residues; it reads MPQLGGGGGGGGGGSGGGGGSSAGAAGGGDD. The tract at residues 1–74 is CTNNB1-binding; it reads MPQLGGGGGG…VKSSLVNESE (74 aa). Disordered stretches follow at residues 1-101, 203-234, and 409-506; these read MPQL…PRDY, SPGS…SPYY, and LYPT…LSLT. The segment covering 67 to 81 has biased composition (low complexity); sequence SSLVNESENQSSSSD. The span at 83-101 shows a compositional bias: basic and acidic residues; that stretch reads EAERRPQPVRDTFQKPRDY. A DNA-binding region (HMG box) is located at residues 346-414; that stretch reads VKKPLNAFML…LHSQLYPTWS (69 aa). The short motif at 421 to 427 is the Nuclear localization signal element; it reads KKKKRKR. Low complexity-rich tracts occupy residues 431 to 441 and 478 to 497; these read LSQTQSQQQVQ and SPAT…ATHS.

The protein belongs to the TCF/LEF family. As to quaternary structure, binds the armadillo repeat of CTNNB1 and forms a stable complex. Interacts with DAZAP2. As to expression, detected in hair follicles and skin keratinocytes, and at lower levels in stomach epithelium.

The protein resides in the nucleus. Functionally, participates in the Wnt signaling pathway. Binds to DNA and acts as a repressor in the absence of CTNNB1, and as an activator in its presence. Necessary for the terminal differentiation of epidermal cells, the formation of keratohyalin granules and the development of the barrier function of the epidermis. Down-regulates NQO1, leading to increased mitomycin c resistance. This is Transcription factor 7-like 1 (TCF7L1) from Homo sapiens (Human).